A 778-amino-acid chain; its full sequence is Endonuclease MutS2 (778 aa).

329–336 contributes to the ATP binding site; it reads GPNTGGKT. The Smr domain maps to 703-778; the sequence is LDLRGKRYEE…GSGCTIVTFK (76 aa).

The protein belongs to the DNA mismatch repair MutS family. MutS2 subfamily. In terms of assembly, homodimer. Binds to stalled ribosomes, contacting rRNA.

Functionally, endonuclease that is involved in the suppression of homologous recombination and thus may have a key role in the control of bacterial genetic diversity. Acts as a ribosome collision sensor, splitting the ribosome into its 2 subunits. Detects stalled/collided 70S ribosomes which it binds and splits by an ATP-hydrolysis driven conformational change. Acts upstream of the ribosome quality control system (RQC), a ribosome-associated complex that mediates the extraction of incompletely synthesized nascent chains from stalled ribosomes and their subsequent degradation. Probably generates substrates for RQC. This chain is Endonuclease MutS2, found in Streptococcus suis (strain 98HAH33).